The following is a 446-amino-acid chain: Sensor-type histidine kinase PrrB (446 aa).

A run of 2 helical transmembrane segments spans residues 19 to 39 (VVAT…VVWV) and 151 to 171 (LLIC…LAAF). The 51-residue stretch at 172–222 (AVRPFKQLAQQTRSVDAGGEAPRVEVHGATEAVEIAEAMRGMLQRIWNEQN) folds into the HAMP domain. Positions 237-446 (VSSHELRTPL…RLLLRISAPS (210 aa)) constitute a Histidine kinase domain. H240 is modified (phosphohistidine; by autocatalysis).

Autophosphorylated.

It localises to the cell membrane. The catalysed reaction is ATP + protein L-histidine = ADP + protein N-phospho-L-histidine.. Functionally, member of the two-component regulatory system PrrB/PrrA that is involved specifically in early intracellular multiplication of Mycobacterium and is essential for its viability. Functions as a sensor protein kinase which is autophosphorylated at a histidine residue and transfers its phosphate group to the conserved aspartic acid residue in the regulatory domain of PrrA. In turn, PrrA binds to the upstream promoter regions of target genes including itself to positively regulate their expression. This chain is Sensor-type histidine kinase PrrB (prrB), found in Mycobacterium leprae (strain TN).